Here is a 178-residue protein sequence, read N- to C-terminus: Peptide deformylase 2 (178 aa).

Residues Cys101 and His143 each coordinate Fe cation. Glu144 is a catalytic residue. His147 contributes to the Fe cation binding site.

The protein belongs to the polypeptide deformylase family. Requires Fe(2+) as cofactor.

The enzyme catalyses N-terminal N-formyl-L-methionyl-[peptide] + H2O = N-terminal L-methionyl-[peptide] + formate. Removes the formyl group from the N-terminal Met of newly synthesized proteins. Requires at least a dipeptide for an efficient rate of reaction. N-terminal L-methionine is a prerequisite for activity but the enzyme has broad specificity at other positions. This Pseudomonas putida (strain ATCC 47054 / DSM 6125 / CFBP 8728 / NCIMB 11950 / KT2440) protein is Peptide deformylase 2.